A 445-amino-acid chain; its full sequence is UPF0210 protein STER_0157 (445 aa).

It belongs to the UPF0210 family. As to quaternary structure, homodimer.

The sequence is that of UPF0210 protein STER_0157 from Streptococcus thermophilus (strain ATCC BAA-491 / LMD-9).